The chain runs to 328 residues: Tetraacyldisaccharide 4'-kinase (328 aa).

55–62 (TAGGNGKT) provides a ligand contact to ATP.

The protein belongs to the LpxK family.

It carries out the reaction a lipid A disaccharide + ATP = a lipid IVA + ADP + H(+). Its pathway is glycolipid biosynthesis; lipid IV(A) biosynthesis; lipid IV(A) from (3R)-3-hydroxytetradecanoyl-[acyl-carrier-protein] and UDP-N-acetyl-alpha-D-glucosamine: step 6/6. Functionally, transfers the gamma-phosphate of ATP to the 4'-position of a tetraacyldisaccharide 1-phosphate intermediate (termed DS-1-P) to form tetraacyldisaccharide 1,4'-bis-phosphate (lipid IVA). The protein is Tetraacyldisaccharide 4'-kinase of Escherichia fergusonii (strain ATCC 35469 / DSM 13698 / CCUG 18766 / IAM 14443 / JCM 21226 / LMG 7866 / NBRC 102419 / NCTC 12128 / CDC 0568-73).